The chain runs to 925 residues: Protein translocase subunit SecA (925 aa).

ATP is bound by residues glutamine 87, 105 to 109, and aspartate 512; that span reads GEGKT. Zn(2+) is bound by residues cysteine 910, cysteine 912, cysteine 921, and histidine 922.

This sequence belongs to the SecA family. Monomer and homodimer. Part of the essential Sec protein translocation apparatus which comprises SecA, SecYEG and auxiliary proteins SecDF-YajC and YidC. The cofactor is Zn(2+).

The protein localises to the cell inner membrane. Its subcellular location is the cytoplasm. It catalyses the reaction ATP + H2O + cellular proteinSide 1 = ADP + phosphate + cellular proteinSide 2.. Its function is as follows. Part of the Sec protein translocase complex. Interacts with the SecYEG preprotein conducting channel. Has a central role in coupling the hydrolysis of ATP to the transfer of proteins into and across the cell membrane, serving both as a receptor for the preprotein-SecB complex and as an ATP-driven molecular motor driving the stepwise translocation of polypeptide chains across the membrane. The sequence is that of Protein translocase subunit SecA from Psychrobacter sp. (strain PRwf-1).